The following is a 368-amino-acid chain: 3-dehydroquinate synthase (368 aa).

NAD(+)-binding positions include 69-74 (DGEAYK), 103-107 (GVIGD), 127-128 (TT), Lys-140, and Lys-149. Zn(2+) contacts are provided by Glu-182, His-245, and His-262.

The protein belongs to the sugar phosphate cyclases superfamily. Dehydroquinate synthase family. Co(2+) is required as a cofactor. It depends on Zn(2+) as a cofactor. NAD(+) serves as cofactor.

The protein resides in the cytoplasm. It catalyses the reaction 7-phospho-2-dehydro-3-deoxy-D-arabino-heptonate = 3-dehydroquinate + phosphate. It participates in metabolic intermediate biosynthesis; chorismate biosynthesis; chorismate from D-erythrose 4-phosphate and phosphoenolpyruvate: step 2/7. Its function is as follows. Catalyzes the conversion of 3-deoxy-D-arabino-heptulosonate 7-phosphate (DAHP) to dehydroquinate (DHQ). This is 3-dehydroquinate synthase from Pseudomonas aeruginosa (strain LESB58).